A 198-amino-acid chain; its full sequence is Ribonuclease HII (198 aa).

The RNase H type-2 domain occupies 10 to 198 (HLVAGVDEVG…PVKRALGLVC (189 aa)). A divalent metal cation contacts are provided by Asp-16, Glu-17, and Asp-108.

The protein belongs to the RNase HII family. The cofactor is Mn(2+). Mg(2+) is required as a cofactor.

The protein localises to the cytoplasm. It carries out the reaction Endonucleolytic cleavage to 5'-phosphomonoester.. Its function is as follows. Endonuclease that specifically degrades the RNA of RNA-DNA hybrids. This is Ribonuclease HII from Enterobacter sp. (strain 638).